The primary structure comprises 488 residues: MTFNHKTIEELHDLLVKKEISAVELTQATLADIKEREGAVDSFITVSEEEALAKAAALDAKGIDADNLMSGIPLAVKDNISTKGILTTAASKMLYNYKPIFDATSVEKLYGKDMIIVGKTNMDEFAMGGSSENSYFKTTKNAWDGSKVPGGSSGGSATAVASGQVRLSLGSDTGGSIRQPASFNGVVGLKPTYGRVSRFGLIAFGSSLDQIGPFSQTVKENAQLLNVISGNDPKDSTSSQEAVPDFTNKIGQDIKGMKIALPKEYMGEGIDSKVKETILAAAKHLESLGAIVEEVSLPHSKYGVAVYYIIASSEASSNLQRFDGIRYGYRAEDIENLEDVYVKSRSEGFGEEVKRRIMLGTFSLSSGYYDAYFKKAGQVRTLIMQDFAKVFEKYDLILGPTAPTVAYDLGSQNQDPVAMYLADLLTIPVNLAGLPGISIPAGFADGLPVGLQLIGNHFDEATIYQAAAAFEATTDYHKQQPVIFGGEK.

Active-site charge relay system residues include K77 and S152. Catalysis depends on S176, which acts as the Acyl-ester intermediate.

It belongs to the amidase family. GatA subfamily. In terms of assembly, heterotrimer of A, B and C subunits.

It carries out the reaction L-glutamyl-tRNA(Gln) + L-glutamine + ATP + H2O = L-glutaminyl-tRNA(Gln) + L-glutamate + ADP + phosphate + H(+). Functionally, allows the formation of correctly charged Gln-tRNA(Gln) through the transamidation of misacylated Glu-tRNA(Gln) in organisms which lack glutaminyl-tRNA synthetase. The reaction takes place in the presence of glutamine and ATP through an activated gamma-phospho-Glu-tRNA(Gln). The sequence is that of Glutamyl-tRNA(Gln) amidotransferase subunit A from Streptococcus gordonii (strain Challis / ATCC 35105 / BCRC 15272 / CH1 / DL1 / V288).